Here is a 298-residue protein sequence, read N- to C-terminus: N-acetylmuramic acid 6-phosphate etherase (298 aa).

In terms of domain architecture, SIS spans Ile-55 to Lys-218. The Proton donor role is filled by Glu-83. Glu-114 is a catalytic residue.

It belongs to the GCKR-like family. MurNAc-6-P etherase subfamily. Homodimer.

The catalysed reaction is N-acetyl-D-muramate 6-phosphate + H2O = N-acetyl-D-glucosamine 6-phosphate + (R)-lactate. It functions in the pathway amino-sugar metabolism; 1,6-anhydro-N-acetylmuramate degradation. The protein operates within amino-sugar metabolism; N-acetylmuramate degradation. Its pathway is cell wall biogenesis; peptidoglycan recycling. In terms of biological role, specifically catalyzes the cleavage of the D-lactyl ether substituent of MurNAc 6-phosphate, producing GlcNAc 6-phosphate and D-lactate. Together with AnmK, is also required for the utilization of anhydro-N-acetylmuramic acid (anhMurNAc) either imported from the medium or derived from its own cell wall murein, and thus plays a role in cell wall recycling. The sequence is that of N-acetylmuramic acid 6-phosphate etherase from Escherichia coli (strain SMS-3-5 / SECEC).